The chain runs to 512 residues: Dihydroniloticin synthase CYP71CD1 (512 aa).

Residues Tyr7–Trp27 traverse the membrane as a helical segment. Position 451 (Cys451) interacts with heme.

It belongs to the cytochrome P450 family. It depends on heme as a cofactor. Accumulates in mature fruits and in juice vesicles.

It localises to the membrane. The enzyme catalyses tirucalla-7,24-dien-3beta-ol + 2 reduced [NADPH--hemoprotein reductase] + 2 O2 = dihydroniloticin + 2 oxidized [NADPH--hemoprotein reductase] + 2 H2O + 2 H(+). It participates in secondary metabolite biosynthesis; terpenoid biosynthesis. Monooxygenase involved in the biosynthesis of limonoids triterpene natural products such as limonin, a compound with insecticidal activity responsible for the bitter taste in citrus. Catalyzes the conversion of tirucalladienol to dihydroniloticin. The polypeptide is Dihydroniloticin synthase CYP71CD1 (Citrus sinensis (Sweet orange)).